A 313-amino-acid chain; its full sequence is CRISPR-associated endonuclease Cas1 1 (313 aa).

Mn(2+) is bound by residues glutamate 144, histidine 211, and aspartate 224. The segment at 288 to 313 (PPLDAPEAVDPVIPPEEPSGDDGHRG) is disordered.

It belongs to the CRISPR-associated endonuclease Cas1 family. Homodimer, forms a heterotetramer with a Cas2 homodimer. It depends on Mg(2+) as a cofactor. The cofactor is Mn(2+).

CRISPR (clustered regularly interspaced short palindromic repeat), is an adaptive immune system that provides protection against mobile genetic elements (viruses, transposable elements and conjugative plasmids). CRISPR clusters contain spacers, sequences complementary to antecedent mobile elements, and target invading nucleic acids. CRISPR clusters are transcribed and processed into CRISPR RNA (crRNA). Acts as a dsDNA endonuclease. Involved in the integration of spacer DNA into the CRISPR cassette. This chain is CRISPR-associated endonuclease Cas1 1, found in Rhodospirillum rubrum (strain ATCC 11170 / ATH 1.1.1 / DSM 467 / LMG 4362 / NCIMB 8255 / S1).